The chain runs to 214 residues: Pyrrolidone-carboxylate peptidase (214 aa).

Catalysis depends on residues Glu-80, Cys-143, and His-166.

Belongs to the peptidase C15 family. In terms of assembly, homotetramer.

Its subcellular location is the cytoplasm. It catalyses the reaction Release of an N-terminal pyroglutamyl group from a polypeptide, the second amino acid generally not being Pro.. In terms of biological role, removes 5-oxoproline from various penultimate amino acid residues except L-proline. The sequence is that of Pyrrolidone-carboxylate peptidase from Enterobacter sp. (strain 638).